The following is a 266-amino-acid chain: Undecaprenyl-diphosphatase (266 aa).

8 helical membrane passes run 1–21 (MDTFQVIILALIQGLTEFLPI), 39–59 (QGLSFDVAVNTGSLLAVVMYF), 87–107 (WWIILATIPAVIVGFTAKGFI), 111–131 (LRNIEVIAATTIIFGLLLWWA), 144–164 (VGWKKALVIGLAQAMALIPGT), 183–203 (AAARFSFLMSVPVSLGAAILV), 218–238 (ALGLGIVVSFIAAYVCIHYFL), and 246–266 (MTPFVIYRLVLGAVLCGFIFL).

It belongs to the UppP family.

It is found in the cell inner membrane. It catalyses the reaction di-trans,octa-cis-undecaprenyl diphosphate + H2O = di-trans,octa-cis-undecaprenyl phosphate + phosphate + H(+). Functionally, catalyzes the dephosphorylation of undecaprenyl diphosphate (UPP). Confers resistance to bacitracin. The sequence is that of Undecaprenyl-diphosphatase from Shewanella piezotolerans (strain WP3 / JCM 13877).